The sequence spans 856 residues: MEYLEDNKTETFEEEDKEREEDQVLDSDEVLDSNELNDMQECLSQTDLSNIDNNRAIQQLSLGSMEFPSYTTNSEKEEMLLGLADNFWHQYTHLYPDRKPLFMCPRNECGVEKFVCTTLHPTLLPYSDLYDWDQSAKFVSEYLTMEPLNPPLELPRSLFSSTSVLQKQSGNCFDFSVLLCSLLLGAGYDAYCVSGYATREMCLMDEKRNICPLLNKVEESSWEIPQKPLKKYTVKPPRQLISKFAVQQEAKKQAKMEEALRNEQEEETRLKEDAEKPGPDNLHGLRVHCWVLVLSGKREVPENFFIDALTGKSYATISEPFLGVESVWNHEDYWVNMQDCRNGCKDMKFDLGDPVCWEYLLQGGSKPLLLIPDEEDEEELNGETIQENKTIFQMPPSWVLPIVIRPKEFETRCPQGRKILQYKKAKHEKWAPYLKRDGHVSRLTGYLDTECTQEVKIQDCFQNRKDKLDLREQNKIEQVTTEYFIPGRADSLKVHEYRSLAPETERSMMFYSEARLDGLQRRDEKPVEMTEIYQGRADFLYYRHIVFGKRPKKVAIAGGPTEANPRPILKITERFNRNKEKPANEDVAERTFLLTEDRIQLRCHRKDDHITTSYWEFLKPANLGEKDTPIVLTPETCISYQVEPSEKFSKQLYVYETLVTLQQAEQNSKDNVRKSETEVREILATRAQEEADPQLTISIYDTERNEKSKEKREAMERAIQEERQRRAVQELDYLAPFLAQLGDPEKLTLWQAQKVKEDCLSDMKQRLIEKANLIQARFEKETQELQKKQQWYHQNQMSMSKEDEEAYLDYCSEAMFRIHILETRLNRHKDLAPQKYLALEDRLNKDPRLREPFLTS.

Positions 1–11 are enriched in basic and acidic residues; that stretch reads MEYLEDNKTET. Disordered stretches follow at residues 1-30 and 255-277; these read MEYL…SDEV and KMEE…AEKP. The segment covering 12–30 has biased composition (acidic residues); it reads FEEEDKEREEDQVLDSDEV. Coiled-coil stretches lie at residues 245-276, 661-733, and 764-790; these read AVQQ…DAEK, LQQA…ELDY, and KQRL…KKQQ.

It belongs to the DRC7 family. As to quaternary structure, component of the nexin-dynein regulatory complex (N-DRC).

The protein localises to the cell projection. Its subcellular location is the cilium. It localises to the flagellum. The protein resides in the cytoplasm. It is found in the cytoskeleton. The protein localises to the cilium axoneme. Its subcellular location is the flagellum axoneme. In terms of biological role, component of the nexin-dynein regulatory complex (N-DRC) a key regulator of ciliary/flagellar motility which maintains the alignment and integrity of the distal axoneme and regulates microtubule sliding in motile axonemes. Involved in the regulation of flagellar motility. Essential for male fertility, sperm head morphogenesis and sperm flagellum formation. This Xenopus tropicalis (Western clawed frog) protein is Dynein regulatory complex subunit 7 (drc7).